A 632-amino-acid chain; its full sequence is Chaperone protein HtpG (632 aa).

The interval 1–345 (MTTAAHAETL…SKDLSLNVSR (345 aa)) is a; substrate-binding. The b stretch occupies residues 346–561 (ELLQKDPQVD…EHDMGYQMRR (216 aa)). The c stretch occupies residues 562–632 (LMEAAGQPLP…VQRLNKLLSH (71 aa)).

Belongs to the heat shock protein 90 family. Homodimer.

Its subcellular location is the cytoplasm. Molecular chaperone. Has ATPase activity. In Chromohalobacter salexigens (strain ATCC BAA-138 / DSM 3043 / CIP 106854 / NCIMB 13768 / 1H11), this protein is Chaperone protein HtpG.